The chain runs to 294 residues: NADH-cytochrome b5 reductase 2 (294 aa).

A helical membrane pass occupies residues 11-27 (VLLPVVAAATSIGLVYH). The region spanning 45 to 149 (DEWIDLKLKK…KGPIVKWKWE (105 aa)) is the FAD-binding FR-type domain. FAD is bound at residue 152 to 187 (QFQSIALIGGGTGITPLYQLLHEITKNPEDKTKVKL).

This sequence belongs to the flavoprotein pyridine nucleotide cytochrome reductase family. The cofactor is FAD.

The protein localises to the mitochondrion outer membrane. The enzyme catalyses 2 Fe(III)-[cytochrome b5] + NADH = 2 Fe(II)-[cytochrome b5] + NAD(+) + H(+). Its function is as follows. May mediate the reduction of outer membrane cytochrome b5. In Meyerozyma guilliermondii (strain ATCC 6260 / CBS 566 / DSM 6381 / JCM 1539 / NBRC 10279 / NRRL Y-324) (Yeast), this protein is NADH-cytochrome b5 reductase 2 (MCR1).